Consider the following 185-residue polypeptide: Ribosome-recycling factor (185 aa).

This sequence belongs to the RRF family.

It is found in the cytoplasm. Its function is as follows. Responsible for the release of ribosomes from messenger RNA at the termination of protein biosynthesis. May increase the efficiency of translation by recycling ribosomes from one round of translation to another. The polypeptide is Ribosome-recycling factor (Campylobacter lari (strain RM2100 / D67 / ATCC BAA-1060)).